Here is a 312-residue protein sequence, read N- to C-terminus: UDP-N-acetylenolpyruvoylglucosamine reductase (312 aa).

The region spanning 24–206 (GIGGPADLFA…SADILKVRNE (183 aa)) is the FAD-binding PCMH-type domain. The active site involves arginine 166. The active-site Proton donor is serine 217. Glutamate 307 is an active-site residue.

The protein belongs to the MurB family. FAD is required as a cofactor.

The protein localises to the cytoplasm. The catalysed reaction is UDP-N-acetyl-alpha-D-muramate + NADP(+) = UDP-N-acetyl-3-O-(1-carboxyvinyl)-alpha-D-glucosamine + NADPH + H(+). The protein operates within cell wall biogenesis; peptidoglycan biosynthesis. Its function is as follows. Cell wall formation. The protein is UDP-N-acetylenolpyruvoylglucosamine reductase of Solibacter usitatus (strain Ellin6076).